Reading from the N-terminus, the 149-residue chain is Arginine repressor (149 aa).

Belongs to the ArgR family.

Its subcellular location is the cytoplasm. Its pathway is amino-acid biosynthesis; L-arginine biosynthesis [regulation]. In terms of biological role, regulates arginine biosynthesis genes. This Chlorobaculum tepidum (strain ATCC 49652 / DSM 12025 / NBRC 103806 / TLS) (Chlorobium tepidum) protein is Arginine repressor.